The primary structure comprises 152 residues: Ribosome maturation factor RimP (152 aa).

Belongs to the RimP family.

It localises to the cytoplasm. Functionally, required for maturation of 30S ribosomal subunits. This chain is Ribosome maturation factor RimP, found in Alkaliphilus metalliredigens (strain QYMF).